Here is a 659-residue protein sequence, read N- to C-terminus: DNA ligase (659 aa).

NAD(+) contacts are provided by residues 32–36 (DFEYD), 81–82 (SL), and Glu111. Residue Lys113 is the N6-AMP-lysine intermediate of the active site. Residues Arg134, Glu168, Lys280, and Lys304 each contribute to the NAD(+) site. Residues Cys398, Cys401, Cys416, and Cys421 each contribute to the Zn(2+) site. Residues 585–655 (ETNSIYFQKR…KELNIPIINE (71 aa)) form the BRCT domain.

This sequence belongs to the NAD-dependent DNA ligase family. LigA subfamily. It depends on Mg(2+) as a cofactor. Requires Mn(2+) as cofactor.

It carries out the reaction NAD(+) + (deoxyribonucleotide)n-3'-hydroxyl + 5'-phospho-(deoxyribonucleotide)m = (deoxyribonucleotide)n+m + AMP + beta-nicotinamide D-nucleotide.. DNA ligase that catalyzes the formation of phosphodiester linkages between 5'-phosphoryl and 3'-hydroxyl groups in double-stranded DNA using NAD as a coenzyme and as the energy source for the reaction. It is essential for DNA replication and repair of damaged DNA. The polypeptide is DNA ligase (Mycoplasma genitalium (strain ATCC 33530 / DSM 19775 / NCTC 10195 / G37) (Mycoplasmoides genitalium)).